Consider the following 71-residue polypeptide: Small ribosomal subunit protein bS21 (71 aa).

The protein belongs to the bacterial ribosomal protein bS21 family.

The chain is Small ribosomal subunit protein bS21 from Shewanella amazonensis (strain ATCC BAA-1098 / SB2B).